The sequence spans 70 residues: MLQPPLNQLTSKINSKYLIATTAAKRAREIDEKPESALLTKYISEKPVGKALEEIADGVVFPDELFLKTY.

The protein belongs to the RNA polymerase subunit omega family. The RNAP catalytic core consists of 2 alpha, 1 beta, 1 beta' and 1 omega subunit. When a sigma factor is associated with the core the holoenzyme is formed, which can initiate transcription.

The catalysed reaction is RNA(n) + a ribonucleoside 5'-triphosphate = RNA(n+1) + diphosphate. Functionally, promotes RNA polymerase assembly. Latches the N- and C-terminal regions of the beta' subunit thereby facilitating its interaction with the beta and alpha subunits. The polypeptide is DNA-directed RNA polymerase subunit omega (Staphylococcus saprophyticus subsp. saprophyticus (strain ATCC 15305 / DSM 20229 / NCIMB 8711 / NCTC 7292 / S-41)).